The sequence spans 472 residues: MNAVTDKSVADYIVADMALAGWGRRELAIAETEMPGLMAIRDEYAASQPLKGARIAGSLHMTIQTGVLIETLVALGAEVRWASCNIFSTQDHAAAAIAATGTPVFAIKGETLEEYWQYTHKIFEWPEGRHANMILDDGGDATLLLHLGARAEQDISVLAKPGSEEERVLFAAIKETLARDPKWYSTRLAQIKGVTEETTTGVHRLYQMSQKGELAFAAINVNDSVTKSKFDNLYGCRESLVDGIKRATDVMVAGKIAVVAGYGDVGKGCAQALAALRAQVWVTEIDPICALQAAMEGFKVVTMEEAAAHADIFVTATGNYHVITRQHMEAMKDQAIVCNIGHFDNEIDVAGLENCQWEEIKPQVDHVIFPDGKRIILLAKGRLVNLGCATGHPSFVMSSSFANQTIAQIELFTRNEAYTTGQVYVLPKHLDEKVARLHLKKLGAKLSTLSKQQADYIGVPVEGPFKPGHYRY.

Substrate is bound by residues T62, D137, and E197. 198–200 (TTT) serves as a coordination point for NAD(+). Residues K227 and D231 each contribute to the substrate site. Residues N232, 261 to 266 (GYGDVG), E284, N319, 340 to 342 (IGH), and N385 contribute to the NAD(+) site.

This sequence belongs to the adenosylhomocysteinase family. The cofactor is NAD(+).

The protein localises to the cytoplasm. It carries out the reaction S-adenosyl-L-homocysteine + H2O = L-homocysteine + adenosine. The protein operates within amino-acid biosynthesis; L-homocysteine biosynthesis; L-homocysteine from S-adenosyl-L-homocysteine: step 1/1. Functionally, may play a key role in the regulation of the intracellular concentration of adenosylhomocysteine. This chain is Adenosylhomocysteinase, found in Bordetella bronchiseptica (strain ATCC BAA-588 / NCTC 13252 / RB50) (Alcaligenes bronchisepticus).